The following is a 136-amino-acid chain: NHL-repeat-containing protein 4 (136 aa).

NHL repeat units follow at residues 48–91 (QPLG…FPRV) and 93–132 (PPIC…YQYL).

The polypeptide is NHL-repeat-containing protein 4 (Nhlrc4) (Mus musculus (Mouse)).